Consider the following 372-residue polypeptide: Gibberellin 20 oxidase 1 (372 aa).

The Fe2OG dioxygenase domain occupies 209–309; sequence RNDSIMRLNY…RRSLAFFLCP (101 aa). 3 residues coordinate Fe cation: His-234, Asp-236, and His-290. Arg-300 is a catalytic residue.

Belongs to the iron/ascorbate-dependent oxidoreductase family. GA20OX subfamily. Fe(2+) serves as cofactor. The cofactor is L-ascorbate. In terms of tissue distribution, preferentially expressed in reproductive organs. Expressed in the epithelium of embryos and the tapetum of anthers. Expressed at low levels in the shoot apical meristem.

It catalyses the reaction gibberellin A12 + 2 2-oxoglutarate + 3 O2 + H(+) = gibberellin A9 + 2 succinate + 3 CO2 + 2 H2O. It carries out the reaction gibberellin A53 + 2 2-oxoglutarate + 3 O2 + H(+) = gibberellin A20 + 2 succinate + 3 CO2 + 2 H2O. Key oxidase enzyme in the biosynthesis of gibberellin. Catalyzes the conversion of GA12 and GA53 to GA9 and GA20 respectively, via a three-step oxidation at C-20 of the GA skeleton. In Oryza sativa subsp. japonica (Rice), this protein is Gibberellin 20 oxidase 1.